The primary structure comprises 203 residues: Non-specific lipid transfer protein GPI-anchored 20 (203 aa).

An N-terminal signal peptide occupies residues 1–21 (MSKIISLVVAMIAVLALPIRG). Intrachain disulfides connect C29–C74, C40–C58, C59–C99, and C72–C108. N-linked (GlcNAc...) asparagine glycosylation is found at N46, N50, and N88. The disordered stretch occupies residues 119–182 (GPAATFGPSM…TSRPSETPSS (64 aa)). 2 stretches are compositionally biased toward polar residues: residues 144–156 (AAQTPQSDTTRPF) and 169–179 (DGGSTSRPSET). A lipid anchor (GPI-anchor amidated serine) is attached at S172. The propeptide at 173–203 (TSRPSETPSSAYALSPSLLFFSIALVALKFY) is removed in mature form.

Belongs to the plant LTP family. As to expression, expressed in seedlings, preferentially in hypocotyls and roots. Also observed in siliques and sepals.

The protein resides in the cell membrane. In terms of biological role, probable lipid transfer protein. The protein is Non-specific lipid transfer protein GPI-anchored 20 of Arabidopsis thaliana (Mouse-ear cress).